The chain runs to 495 residues: AAA-ATPase At2g18193 (495 aa).

A helical transmembrane segment spans residues 7 to 28 (FSFSPSSLFSAYASLTGFLMLF). 250-257 (GPPGTGKS) provides a ligand contact to ATP. The tract at residues 451–495 (EVSICKATDDDEKQNGSLGCVKKKKKGGKQKGKGKGKGKAKTYLI) is disordered. Positions 471–495 (VKKKKKGGKQKGKGKGKGKAKTYLI) are enriched in basic residues.

Belongs to the AAA ATPase family. BCS1 subfamily. Mg(2+) is required as a cofactor.

The protein resides in the membrane. The enzyme catalyses ATP + H2O = ADP + phosphate + H(+). In Arabidopsis thaliana (Mouse-ear cress), this protein is AAA-ATPase At2g18193.